A 383-amino-acid polypeptide reads, in one-letter code: Mannitol-1-phosphate 5-dehydrogenase (383 aa).

3 to 14 (AVHFGAGNIGRG) is an NAD(+) binding site.

Belongs to the mannitol dehydrogenase family.

It carries out the reaction D-mannitol 1-phosphate + NAD(+) = beta-D-fructose 6-phosphate + NADH + H(+). This Lacticaseibacillus casei (strain BL23) (Lactobacillus casei) protein is Mannitol-1-phosphate 5-dehydrogenase.